The sequence spans 320 residues: 1-aminocyclopropane-1-carboxylate oxidase (320 aa).

Positions 156–256 (PTFGTKVSNY…RMSIASFYNP (101 aa)) constitute a Fe2OG dioxygenase domain. Fe cation-binding residues include His180, Asp182, and His237.

The protein belongs to the iron/ascorbate-dependent oxidoreductase family. It depends on Fe cation as a cofactor.

It carries out the reaction 1-aminocyclopropane-1-carboxylate + L-ascorbate + O2 = ethene + L-dehydroascorbate + hydrogen cyanide + CO2 + 2 H2O. Its pathway is alkene biosynthesis; ethylene biosynthesis via S-adenosyl-L-methionine; ethylene from S-adenosyl-L-methionine: step 2/2. The protein is 1-aminocyclopropane-1-carboxylate oxidase (ACO) of Brassica juncea (Indian mustard).